Reading from the N-terminus, the 427-residue chain is Glutamate-1-semialdehyde 2,1-aminomutase (427 aa).

Lysine 267 carries the post-translational modification N6-(pyridoxal phosphate)lysine.

It belongs to the class-III pyridoxal-phosphate-dependent aminotransferase family. HemL subfamily. In terms of assembly, homodimer. It depends on pyridoxal 5'-phosphate as a cofactor.

It is found in the cytoplasm. It catalyses the reaction (S)-4-amino-5-oxopentanoate = 5-aminolevulinate. It functions in the pathway porphyrin-containing compound metabolism; protoporphyrin-IX biosynthesis; 5-aminolevulinate from L-glutamyl-tRNA(Glu): step 2/2. This is Glutamate-1-semialdehyde 2,1-aminomutase from Geotalea daltonii (strain DSM 22248 / JCM 15807 / FRC-32) (Geobacter daltonii).